We begin with the raw amino-acid sequence, 955 residues long: 2-oxoglutarate dehydrogenase E1 component (955 aa).

This sequence belongs to the alpha-ketoglutarate dehydrogenase family. As to quaternary structure, homodimer. Part of the 2-oxoglutarate dehydrogenase (OGDH) complex composed of E1 (2-oxoglutarate dehydrogenase), E2 (dihydrolipoamide succinyltransferase) and E3 (dihydrolipoamide dehydrogenase); the complex contains multiple copies of the three enzymatic components (E1, E2 and E3). Thiamine diphosphate serves as cofactor.

The catalysed reaction is N(6)-[(R)-lipoyl]-L-lysyl-[protein] + 2-oxoglutarate + H(+) = N(6)-[(R)-S(8)-succinyldihydrolipoyl]-L-lysyl-[protein] + CO2. E1 component of the 2-oxoglutarate dehydrogenase (OGDH) complex which catalyzes the decarboxylation of 2-oxoglutarate, the first step in the conversion of 2-oxoglutarate to succinyl-CoA and CO(2). This Bacillus cereus (strain AH187) protein is 2-oxoglutarate dehydrogenase E1 component.